Consider the following 501-residue polypeptide: Zinc-binding lipoprotein AdcA (501 aa).

A signal peptide spans 1–18 (MKKISLLLASLCALFLVA). Residue Cys19 is the site of N-palmitoyl cysteine attachment. Cys19 carries S-diacylglycerol cysteine lipidation. Residue His63 coordinates Zn(2+). Residues 116–136 (LPGGEEEEGDHDHGEEGHHHE) form a disordered region. Residues 120 to 136 (EEEEGDHDHGEEGHHHE) are his-rich loop. A compositionally biased stretch (basic and acidic residues) spans 125–136 (DHDHGEEGHHHE). 3 residues coordinate Zn(2+): His140, His204, and Glu279.

Belongs to the bacterial solute-binding protein 9 family.

The protein localises to the cell membrane. Its function is as follows. Part of the ATP-binding cassette (ABC) transport system AdcABC involved in zinc import. Binds zinc with high affinity and specificity and delivers it to the membrane permease for translocation into the cytoplasm. The sequence is that of Zinc-binding lipoprotein AdcA (adcA) from Streptococcus pneumoniae serotype 4 (strain ATCC BAA-334 / TIGR4).